A 486-amino-acid polypeptide reads, in one-letter code: Ribosomal RNA small subunit methyltransferase F (486 aa).

S-adenosyl-L-methionine is bound by residues 124-130 (ASAPGSK), E148, D175, and D193. C246 serves as the catalytic Nucleophile.

Belongs to the class I-like SAM-binding methyltransferase superfamily. RsmB/NOP family.

It is found in the cytoplasm. The catalysed reaction is cytidine(1407) in 16S rRNA + S-adenosyl-L-methionine = 5-methylcytidine(1407) in 16S rRNA + S-adenosyl-L-homocysteine + H(+). In terms of biological role, specifically methylates the cytosine at position 1407 (m5C1407) of 16S rRNA. The polypeptide is Ribosomal RNA small subunit methyltransferase F (Shewanella baltica (strain OS155 / ATCC BAA-1091)).